A 476-amino-acid polypeptide reads, in one-letter code: G-patch domain and KOW motifs-containing protein (476 aa).

Residues M1–L96 form a disordered region. A2 is subject to N-acetylalanine. Residue K5 forms a Glycyl lysine isopeptide (Lys-Gly) (interchain with G-Cter in SUMO2) linkage. The span at A13–T26 shows a compositional bias: polar residues. S27 carries the phosphoserine; by PKA modification. S35 and S42 each carry phosphoserine. Residues P43–Q58 are compositionally biased toward basic and acidic residues. The residue at position 115 (S115) is a Phosphoserine. The region spanning V164–T210 is the G-patch domain. Residues L203 to G244 are disordered. Positions T210–G219 are enriched in polar residues. Phosphothreonine is present on T216. Positions P224–Q237 are enriched in basic and acidic residues. Positions G240–D267 constitute a KOW 1 domain. T316 is modified (phosphothreonine; by PKA). Residues D327–R353 form a disordered region. The segment covering P337 to A351 has biased composition (basic and acidic residues). The 28-residue stretch at P415–A442 folds into the KOW 2 domain. Residue S471 is modified to Phosphoserine. Residue T473 is modified to Phosphothreonine.

Belongs to the MOS2 family. In terms of assembly, component of the minor spliceosome, which splices U12-type introns. Interacts with PRKX. Interacts with DHX16. Interacts with PRKACB. Post-translationally, phosphorylation regulates its ability to bind RNA.

It is found in the nucleus. In terms of biological role, RNA-binding protein involved in pre-mRNA splicing. As a component of the minor spliceosome, involved in the splicing of U12-type introns in pre-mRNAs. The polypeptide is G-patch domain and KOW motifs-containing protein (GPKOW) (Homo sapiens (Human)).